A 462-amino-acid chain; its full sequence is MTDPSTNMRLKLPITCFILQIILIILFGVLVQYDEDTDAKKHHHGNHSESKSDIENDFYYRYPSFQDVHVMIFVGFGFLMTFLQRYGFSSVGFNFLIAAFSLQWATLMQGFFHGLHEGKIHIGVESMINADFCTGSVLISFGAVLGKTSPVQLLFMAVFEVTLFAVNEFILLTLLGTKDAGGSMTIHTFGAYFGLMVTRILYRPNLDKSKHKNCSVYHSDLFAMIGTLYLWMFWPSFNSAVTEHGDPQHRTAMNTYYSLAACTLSTYAMSSLTAHDGKLDMVHIQNAALAGGVAAGTAGEMMLTPFGSMIVGFLAGIISVLGFKYLTPILENKLKIQDTCGIHNLHGMPGVLGAIVGAVTASLASKEVYGEGLEKVFPDVASGKRTASDQGGVQAISLAVTLGMALFGGLIVGFILKLPIFGAPRDTTCFEDSLYWEVPGEEESHEDQLTTVKTEESDKLNS.

Residues 1 to 11 (MTDPSTNMRLK) are Cytoplasmic-facing. A helical transmembrane segment spans residues 12–32 (LPITCFILQIILIILFGVLVQ). Residues 33-62 (YDEDTDAKKHHHGNHSESKSDIENDFYYRY) are Extracellular-facing. A glycan (N-linked (GlcNAc...) asparagine) is linked at Asn46. A helical membrane pass occupies residues 63 to 83 (PSFQDVHVMIFVGFGFLMTFL). The Cytoplasmic portion of the chain corresponds to 84–94 (QRYGFSSVGFN). The helical transmembrane segment at 95 to 115 (FLIAAFSLQWATLMQGFFHGL) threads the bilayer. Over 116–125 (HEGKIHIGVE) the chain is Extracellular. The chain crosses the membrane as a helical span at residues 126-146 (SMINADFCTGSVLISFGAVLG). The Cytoplasmic portion of the chain corresponds to 147–152 (KTSPVQ). A helical membrane pass occupies residues 153 to 173 (LLFMAVFEVTLFAVNEFILLT). Residues 174 to 180 (LLGTKDA) are Extracellular-facing. Residues 181 to 201 (GGSMTIHTFGAYFGLMVTRIL) traverse the membrane as a helical segment. Residues 202-220 (YRPNLDKSKHKNCSVYHSD) are Cytoplasmic-facing. The chain crosses the membrane as a helical span at residues 221-241 (LFAMIGTLYLWMFWPSFNSAV). Residues 242–302 (TEHGDPQHRT…VAAGTAGEMM (61 aa)) lie on the Extracellular side of the membrane. The helical transmembrane segment at 303-323 (LTPFGSMIVGFLAGIISVLGF) threads the bilayer. Residues 324–344 (KYLTPILENKLKIQDTCGIHN) are Cytoplasmic-facing. A helical transmembrane segment spans residues 345 to 365 (LHGMPGVLGAIVGAVTASLAS). Residues 366-395 (KEVYGEGLEKVFPDVASGKRTASDQGGVQA) are Extracellular-facing. The helical transmembrane segment at 396-416 (ISLAVTLGMALFGGLIVGFIL) threads the bilayer. The Cytoplasmic segment spans residues 417–462 (KLPIFGAPRDTTCFEDSLYWEVPGEEESHEDQLTTVKTEESDKLNS). A disordered region spans residues 441–462 (EEESHEDQLTTVKTEESDKLNS). Residues 453–462 (KTEESDKLNS) show a composition bias toward basic and acidic residues.

It belongs to the ammonium transporter (TC 2.A.49) family. Rh subfamily.

Its subcellular location is the basolateral cell membrane. It is found in the cytoplasmic vesicle membrane. Functions as an ammonia transporter. May play a role in the elimination of ammonia in the gill. This is Ammonium transporter Rh type B (rhbg) from Oryzias latipes (Japanese rice fish).